Consider the following 794-residue polypeptide: FT-interacting protein 1 (794 aa).

Basic and acidic residues predominate over residues 1–27 (MAAKDGAKSQEDYKLKDMKPELGERWP). Residues 1–34 (MAAKDGAKSQEDYKLKDMKPELGERWPHGGQRGG) form a disordered region. C2 domains lie at 37–158 (WIGS…PQWY), 198–321 (VQGE…SKWY), and 364–492 (YISD…THSY). Ca(2+) contacts are provided by D76, D123, E125, and E131. 4 consecutive transmembrane segments (helical) span residues 510–532 (LAVR…PLLP), 595–615 (IVSV…VCYW), 619–639 (LTTI…ELIL), and 737–757 (LFVI…FKII).

The protein belongs to the MCTP family. In terms of assembly, interacts with FT in phloem companion cells. Ca(2+) serves as cofactor. As to expression, expressed in the vascular tissues of roots, cotyledons and rosette leaves. Specifically located in the phloem including companion cells. Observed in flowers. Not detected in the shoot apical meristem.

It is found in the endoplasmic reticulum membrane. It localises to the cell junction. The protein localises to the plasmodesma. In terms of biological role, involved in the export of FT from the phloem companion cells to the sieve elements through the plasmodesmata. Regulates flowering time under long days. May function as a signaling molecule by regulating the trafficking of other regulators. In Arabidopsis thaliana (Mouse-ear cress), this protein is FT-interacting protein 1.